The primary structure comprises 408 residues: Argininosuccinate synthase (408 aa).

Residues alanine 8–threonine 16 and alanine 35 each bind ATP. L-citrulline is bound by residues tyrosine 86 and serine 91. ATP is bound at residue glycine 116. L-aspartate is bound by residues threonine 118, asparagine 122, and aspartate 123. Asparagine 122 is an L-citrulline binding site. Positions 126, 177, 186, 263, and 275 each coordinate L-citrulline.

Belongs to the argininosuccinate synthase family. Type 1 subfamily. As to quaternary structure, homotetramer.

Its subcellular location is the cytoplasm. It catalyses the reaction L-citrulline + L-aspartate + ATP = 2-(N(omega)-L-arginino)succinate + AMP + diphosphate + H(+). It functions in the pathway amino-acid biosynthesis; L-arginine biosynthesis; L-arginine from L-ornithine and carbamoyl phosphate: step 2/3. The chain is Argininosuccinate synthase from Lachnospira eligens (strain ATCC 27750 / DSM 3376 / VPI C15-48 / C15-B4) (Eubacterium eligens).